The sequence spans 1219 residues: Autophagy-related protein 11 (1219 aa).

Residues 636–824 adopt a coiled-coil conformation; it reads QLRIKELENV…ESMEQQTEQS (189 aa). 2 disordered regions span residues 811–882 and 895–926; these read QNMK…QNMG and TPTS…PIKS. Over residues 818–830 the composition is skewed to polar residues; the sequence is EQQTEQSANQSID. Positions 831 to 863 are enriched in low complexity; the sequence is QSIEQSTEQSTEQSTEQSMEQSMEQSMEQSVEQ. The segment covering 864 to 877 has biased composition (basic and acidic residues); sequence SMEHSMEHSMEQSE. Over residues 909 to 925 the composition is skewed to polar residues; sequence PESQLLKSNTTELQPIK. Residues 1052 to 1081 are a coiled coil; sequence RFEDIELLAKKLAKENKAKKNLFEKYRCER.

It belongs to the ATG11 family. In terms of assembly, homodimer.

It localises to the preautophagosomal structure membrane. The protein localises to the vacuole membrane. Its function is as follows. Involved in cytoplasm to vacuole transport (Cvt), pexophagy, mitophagy and nucleophagy. Recruits mitochondria for their selective degradation via autophagy (mitophagy) during starvation. Works as scaffold proteins that recruit ATG proteins to the pre-autophagosome (PAS), the site of vesicle/autophagosome formation. Required for the Cvt vesicles completion. The protein is Autophagy-related protein 11 (ATG11) of Vanderwaltozyma polyspora (strain ATCC 22028 / DSM 70294 / BCRC 21397 / CBS 2163 / NBRC 10782 / NRRL Y-8283 / UCD 57-17) (Kluyveromyces polysporus).